We begin with the raw amino-acid sequence, 368 residues long: Agmatine deiminase (368 aa).

Residue Cys357 is the Amidino-cysteine intermediate of the active site.

The protein belongs to the agmatine deiminase family. In terms of assembly, homodimer.

The enzyme catalyses agmatine + H2O = N-carbamoylputrescine + NH4(+). It functions in the pathway amine and polyamine biosynthesis; putrescine biosynthesis via agmatine pathway; N-carbamoylputrescine from agmatine: step 1/1. Mediates the hydrolysis of agmatine into N-carbamoylputrescine in the arginine decarboxylase (ADC) pathway of putrescine biosynthesis, a basic polyamine. The chain is Agmatine deiminase from Pseudomonas syringae pv. tomato (strain ATCC BAA-871 / DC3000).